The primary structure comprises 731 residues: Catalase-peroxidase (731 aa).

Positions 98–226 (WHAAGTYRTA…LAAVQMGLIY (129 aa)) form a cross-link, tryptophyl-tyrosyl-methioninium (Trp-Tyr) (with M-252). His99 functions as the Proton acceptor in the catalytic mechanism. The tryptophyl-tyrosyl-methioninium (Tyr-Met) (with W-98) cross-link spans 226 to 252 (YVNPEGPDGNPDIVASGHDVIETFGRM). A heme b-binding site is contributed by His267.

Belongs to the peroxidase family. Peroxidase/catalase subfamily. Homodimer or homotetramer. It depends on heme b as a cofactor. Post-translationally, formation of the three residue Trp-Tyr-Met cross-link is important for the catalase, but not the peroxidase activity of the enzyme.

It catalyses the reaction H2O2 + AH2 = A + 2 H2O. It carries out the reaction 2 H2O2 = O2 + 2 H2O. Bifunctional enzyme with both catalase and broad-spectrum peroxidase activity. The polypeptide is Catalase-peroxidase (Ruegeria pomeroyi (strain ATCC 700808 / DSM 15171 / DSS-3) (Silicibacter pomeroyi)).